Reading from the N-terminus, the 113-residue chain is U11-theraphotoxin-Hhn1a (113 aa).

Positions 1 to 21 (MNTVRVTFLLVFVLAVSLGRA) are cleaved as a signal peptide. A propeptide spanning residues 22 to 74 (DKEENRMEMQEKTEQGKSYLDFAENLLLQKLEELEAKLLEEDSEESRNSRQKR) is cleaved from the precursor. The tract at residues 61 to 83 (EEDSEESRNSRQKRCIGEGVPCD) is disordered. 3 disulfides stabilise this stretch: Cys75-Cys90, Cys82-Cys95, and Cys89-Cys110.

This sequence belongs to the neurotoxin 14 (magi-1) family. 01 (HNTX-16) subfamily. In terms of tissue distribution, expressed by the venom gland.

Its subcellular location is the secreted. Functionally, probable ion channel inhibitor. The sequence is that of U11-theraphotoxin-Hhn1a from Cyriopagopus hainanus (Chinese bird spider).